The primary structure comprises 293 residues: 4-hydroxy-tetrahydrodipicolinate synthase (293 aa).

A pyruvate-binding site is contributed by Thr45. Residue Tyr133 is the Proton donor/acceptor of the active site. Catalysis depends on Lys161, which acts as the Schiff-base intermediate with substrate. Ile203 lines the pyruvate pocket.

It belongs to the DapA family. Homotetramer; dimer of dimers.

It is found in the cytoplasm. It carries out the reaction L-aspartate 4-semialdehyde + pyruvate = (2S,4S)-4-hydroxy-2,3,4,5-tetrahydrodipicolinate + H2O + H(+). The protein operates within amino-acid biosynthesis; L-lysine biosynthesis via DAP pathway; (S)-tetrahydrodipicolinate from L-aspartate: step 3/4. Catalyzes the condensation of (S)-aspartate-beta-semialdehyde [(S)-ASA] and pyruvate to 4-hydroxy-tetrahydrodipicolinate (HTPA). The protein is 4-hydroxy-tetrahydrodipicolinate synthase of Shewanella denitrificans (strain OS217 / ATCC BAA-1090 / DSM 15013).